The chain runs to 83 residues: Hainantoxin-III (83 aa).

Positions 1–21 (MKASMFLALAGLVLLFVVGYA) are cleaved as a signal peptide. The propeptide occupies 22 to 48 (SESEEKEFPRELLSKIFALDDFKGEER). 3 disulfides stabilise this stretch: Cys-50–Cys-65, Cys-57–Cys-70, and Cys-64–Cys-77. Leu-81 is subject to Leucine amide.

This sequence belongs to the neurotoxin 10 (Hwtx-1) family. 15 (Hntx-3) subfamily. Monomer. In terms of tissue distribution, expressed by the venom gland.

It localises to the secreted. Its function is as follows. Selective antagonist of neuronal tetrodotoxin (TTX)-sensitive voltage-gated sodium channels (IC(50)=1270 nM on Nav1.1/SCN1A, 270 nM on Nav1.2/SCN2A, 491 nM on Nav1.3/SCN3A and 232 nM on Nav1.7/SCN9A). This toxin suppress Nav1.7 current amplitude without significantly altering the activation, inactivation, and repriming kinetics. Short extreme depolarizations partially activate the toxin-bound channel, indicating voltage-dependent inhibition of this toxin. This toxin increases the deactivation of the Nav1.7 current after extreme depolarizations. The toxin-Nav1.7 complex is gradually dissociated upon prolonged strong depolarizations in a voltage-dependent manner, and the unbound toxin rebinds to Nav1.7 after a long repolarization. Moreover, analysis of chimeric channels showed that the DIIS3-S4 linker is critical for toxin binding to Nav1.7. These data are consistent with this toxin interacting with Nav1.7 site 4 and trapping the domain II voltage sensor in the closed state. The protein is Hainantoxin-III of Cyriopagopus hainanus (Chinese bird spider).